Reading from the N-terminus, the 148-residue chain is Deoxyuridine 5'-triphosphate nucleotidohydrolase (148 aa).

Substrate contacts are provided by residues 67–69 (RSG), N80, 84–86 (LID), and M94.

The protein belongs to the dUTPase family. It depends on Mg(2+) as a cofactor.

The catalysed reaction is dUTP + H2O = dUMP + diphosphate + H(+). It functions in the pathway pyrimidine metabolism; dUMP biosynthesis; dUMP from dCTP (dUTP route): step 2/2. Its function is as follows. This enzyme is involved in nucleotide metabolism: it produces dUMP, the immediate precursor of thymidine nucleotides and it decreases the intracellular concentration of dUTP so that uracil cannot be incorporated into DNA. This chain is Deoxyuridine 5'-triphosphate nucleotidohydrolase, found in Burkholderia thailandensis (strain ATCC 700388 / DSM 13276 / CCUG 48851 / CIP 106301 / E264).